We begin with the raw amino-acid sequence, 87 residues long: MAQALLNAGFGNFVAADRLIAIVSPDSAPIRRTVSEARERGQLVDVTCGRRTKAVLIADSGHVILSALQPETIAGRILNSRGDLSGA.

The protein belongs to the RemA family.

The chain is Putative regulatory protein syc0519_c from Synechococcus sp. (strain ATCC 27144 / PCC 6301 / SAUG 1402/1) (Anacystis nidulans).